The following is a 525-amino-acid chain: GMP synthase [glutamine-hydrolyzing] (525 aa).

The region spanning 9–207 (RILILDFGSQ…VLDICGCAAL (199 aa)) is the Glutamine amidotransferase type-1 domain. The Nucleophile role is filled by Cys86. Catalysis depends on residues His181 and Glu183. One can recognise a GMPS ATP-PPase domain in the interval 208-400 (WTPSNIVDDA…LGLPYDMVYR (193 aa)). 235 to 241 (SGGVDSS) contributes to the ATP binding site.

Homodimer.

It catalyses the reaction XMP + L-glutamine + ATP + H2O = GMP + L-glutamate + AMP + diphosphate + 2 H(+). Its pathway is purine metabolism; GMP biosynthesis; GMP from XMP (L-Gln route): step 1/1. Catalyzes the synthesis of GMP from XMP. In Pseudomonas aeruginosa (strain UCBPP-PA14), this protein is GMP synthase [glutamine-hydrolyzing].